We begin with the raw amino-acid sequence, 1833 residues long: Proteasome activator complex subunit 4A (1833 aa).

2 HEAT repeats span residues Pro460–Cys504 and Asn983–Gly1022. A disordered region spans residues Ser1095–Lys1122. Residues Leu1111–Lys1122 are compositionally biased toward basic and acidic residues. HEAT repeat units lie at residues Leu1164–Arg1202, Asp1344–His1382, Ser1626–Phe1664, and Ala1670–Leu1708. The bromodomain-like (BRDL) stretch occupies residues Ser1640–Lys1728.

It belongs to the BLM10 family. As to quaternary structure, homodimer. Interacts with the 20S and 26S proteasomes.

The protein localises to the cytoplasm. Its subcellular location is the cytosol. The protein resides in the nucleus. It is found in the nucleus speckle. Functionally, associated component of the proteasome that specifically recognizes acetylated histones and promotes ATP- and ubiquitin-independent degradation of core histones during DNA damage response. Recognizes and binds acetylated histones via its bromodomain-like (BRDL) region and activates the proteasome by opening the gated channel for substrate entry. Binds to the core proteasome via its C-terminus, which occupies the same binding sites as the proteasomal ATPases, opening the closed structure of the proteasome via an active gating mechanism. involved in DNA damage response in somatic cells: binds to acetylated histones and promotes degradation of histones. The chain is Proteasome activator complex subunit 4A (psme4a) from Danio rerio (Zebrafish).